A 105-amino-acid chain; its full sequence is Small ribosomal subunit protein uS10c (105 aa).

Belongs to the universal ribosomal protein uS10 family. In terms of assembly, part of the 30S ribosomal subunit.

It localises to the plastid. Its subcellular location is the chloroplast. Its function is as follows. Involved in the binding of tRNA to the ribosomes. This is Small ribosomal subunit protein uS10c from Pyropia yezoensis (Susabi-nori).